Consider the following 82-residue polypeptide: MMDIVEIIIGFIALLMTARIFLERSRARKLLYLCCLSFCISALIALYVDSPMGGIVAITYFICSTISSNAIAYTIEQTKHIE.

It to M.thermoautotrophicum MTH386.

This is an uncharacterized protein from Methanocaldococcus jannaschii (strain ATCC 43067 / DSM 2661 / JAL-1 / JCM 10045 / NBRC 100440) (Methanococcus jannaschii).